The sequence spans 204 residues: Urease accessory protein UreG (204 aa).

11 to 18 (GPVGAGKT) is a binding site for GTP.

It belongs to the SIMIBI class G3E GTPase family. UreG subfamily. In terms of assembly, homodimer. UreD, UreF and UreG form a complex that acts as a GTP-hydrolysis-dependent molecular chaperone, activating the urease apoprotein by helping to assemble the nickel containing metallocenter of UreC. The UreE protein probably delivers the nickel.

Its subcellular location is the cytoplasm. In terms of biological role, facilitates the functional incorporation of the urease nickel metallocenter. This process requires GTP hydrolysis, probably effectuated by UreG. This Staphylococcus saprophyticus subsp. saprophyticus (strain ATCC 15305 / DSM 20229 / NCIMB 8711 / NCTC 7292 / S-41) protein is Urease accessory protein UreG.